We begin with the raw amino-acid sequence, 102 residues long: MANKKIRIRLKAYEHRTLDTAAEKIVETATRTGATVAGPVPLPTERSLYTIIRATHKYKDSREQFEMRTHKRLIDIINPTQKTVDALMKLDLPSGVNVEIKL.

Belongs to the universal ribosomal protein uS10 family. In terms of assembly, part of the 30S ribosomal subunit.

Functionally, involved in the binding of tRNA to the ribosomes. The polypeptide is Small ribosomal subunit protein uS10 (Streptococcus thermophilus (strain ATCC BAA-250 / LMG 18311)).